The chain runs to 336 residues: Small ribosomal subunit protein RACK1y (336 aa).

7 WD repeats span residues 15-55 (GHND…TAVA), 74-113 (GHSHFVQDVVLSSDGQFALSGSWDGELRLWDLATGRTTRR), 116-155 (GHTKDVLSVAFSVDNRQIVSAARDNTIKLWNTLGECKYTI), 164-205 (GHTG…LRTK), 208-247 (GHNGYVNAVAVSPDGSLCASGGKDGTTLLWDLTEGKMLYK), 249-287 (DAGAIIHSLCFSPNRYWLCAATEDSVKIWDLESKLVMQD), and 297-336 (SQMLYCTSLSWSADGSTLFAGYTDGTIRVWKVSGFGGYAI).

The protein belongs to the WD repeat G protein beta family. Ribosomal protein RACK1 subfamily. As to quaternary structure, homodimer and heterodimer with RACK1A.

Its function is as follows. Component of the RACK1 regulatory proteins that play a role in multiple signal transduction pathways. The polypeptide is Small ribosomal subunit protein RACK1y (RACK1B) (Oryza sativa subsp. japonica (Rice)).